Here is a 606-residue protein sequence, read N- to C-terminus: Aspartate--tRNA(Asp/Asn) ligase (606 aa).

Glutamate 175 lines the L-aspartate pocket. The tract at residues 199-202 (QLFK) is aspartate. Arginine 221 lines the L-aspartate pocket. ATP is bound by residues 221–223 (RDE) and glutamine 230. Position 453 (histidine 453) interacts with L-aspartate. Glutamate 487 is a binding site for ATP. Residue arginine 494 coordinates L-aspartate. 539 to 542 (GWDR) contacts ATP. The interval 564-606 (GGVDPLTDAPGTIPAEQRKETGVDFKPEKAAKAAQGEKAGKES) is disordered. Over residues 579–594 (EQRKETGVDFKPEKAA) the composition is skewed to basic and acidic residues.

This sequence belongs to the class-II aminoacyl-tRNA synthetase family. Type 1 subfamily. In terms of assembly, homodimer.

Its subcellular location is the cytoplasm. It catalyses the reaction tRNA(Asx) + L-aspartate + ATP = L-aspartyl-tRNA(Asx) + AMP + diphosphate. In terms of biological role, aspartyl-tRNA synthetase with relaxed tRNA specificity since it is able to aspartylate not only its cognate tRNA(Asp) but also tRNA(Asn). Reaction proceeds in two steps: L-aspartate is first activated by ATP to form Asp-AMP and then transferred to the acceptor end of tRNA(Asp/Asn). The chain is Aspartate--tRNA(Asp/Asn) ligase from Corynebacterium aurimucosum (strain ATCC 700975 / DSM 44827 / CIP 107346 / CN-1) (Corynebacterium nigricans).